We begin with the raw amino-acid sequence, 242 residues long: UPF0246 protein SPD_1378 (242 aa).

Belongs to the UPF0246 family.

This chain is UPF0246 protein SPD_1378, found in Streptococcus pneumoniae serotype 2 (strain D39 / NCTC 7466).